The chain runs to 597 residues: MHRTHLAGELRSHHVGQTVTLSGWVARRRDHGGVIFIDLRDRSGLAQVVFRDSDVAAQAHHLRSEYCIRVTGVVDARPEGSENPNLDSGAIELNVNELTILNSSEALPFQIDDQSSSGEVGEETRLKYRYLDLRRKTQHDALVLRSNVNQAARSVLLKHDFHEIETPTLTRSTPEGARDFLVPARLRPGSFYALPQSPQLFKQLLMVGGMERYFQIARCYRDEDFRADRQPEFTQLDVEMSFVDQDDVISVAEEILTAIWKEIGYDIPTPIPRMTYADAMKYYGSDKPDLRFDIKIVECTEFFANTTFRVFQNPYVGAIVMEDGASQPRRQLDAWQDWAKQRGAKGLAYILVGDDGQLSGPVAKNITDAEREGIADHVGAKPGDCIFFAAGDAKSSRALLGAARGEVARKLGLIKEGDWAFTWVVDAPLFEPAADATAEGDVALGHSAWTAVHHAFTSPKPECMDSFDKDPGSALSYAYDIVCNGNEIGGGSIRIHRSDVQQRVFNVMGISDEEAQEKFGFLLEAMKFGAPPHGGIAFGWDRIVSLLGGFESIRDVIAFPKSGGGVDPLTDAPAPITPEQRKESGIDAKPKKKETKN.

Glu-175 is an L-aspartate binding site. The interval 199–202 (QLFK) is aspartate. Arg-221 provides a ligand contact to L-aspartate. Residues 221–223 (RDE) and Gln-230 contribute to the ATP site. His-453 is a binding site for L-aspartate. Glu-487 contacts ATP. Arg-494 contacts L-aspartate. 539–542 (GWDR) provides a ligand contact to ATP. Residues 562–597 (SGGGVDPLTDAPAPITPEQRKESGIDAKPKKKETKN) are disordered. Positions 579-589 (EQRKESGIDAK) are enriched in basic and acidic residues.

The protein belongs to the class-II aminoacyl-tRNA synthetase family. Type 1 subfamily. As to quaternary structure, homodimer.

The protein localises to the cytoplasm. It carries out the reaction tRNA(Asx) + L-aspartate + ATP = L-aspartyl-tRNA(Asx) + AMP + diphosphate. In terms of biological role, aspartyl-tRNA synthetase with relaxed tRNA specificity since it is able to aspartylate not only its cognate tRNA(Asp) but also tRNA(Asn). Reaction proceeds in two steps: L-aspartate is first activated by ATP to form Asp-AMP and then transferred to the acceptor end of tRNA(Asp/Asn). The protein is Aspartate--tRNA(Asp/Asn) ligase of Corynebacterium kroppenstedtii (strain DSM 44385 / JCM 11950 / CIP 105744 / CCUG 35717).